Here is a 297-residue protein sequence, read N- to C-terminus: uncharacterized protein (297 aa).

The HTH araC/xylS-type domain occupies 187-285; that stretch reads EKLIATLHAS…GYAPSAVLKN (99 aa). 2 DNA-binding regions (H-T-H motif) span residues 204–225 and 252–275; these read ADMA…LRYT and VGEV…KHKF.

This is an uncharacterized protein from Escherichia coli (strain K12).